The primary structure comprises 118 residues: Large ribosomal subunit protein bL19 (118 aa).

This sequence belongs to the bacterial ribosomal protein bL19 family.

Its function is as follows. This protein is located at the 30S-50S ribosomal subunit interface and may play a role in the structure and function of the aminoacyl-tRNA binding site. The sequence is that of Large ribosomal subunit protein bL19 from Campylobacter jejuni subsp. jejuni serotype O:2 (strain ATCC 700819 / NCTC 11168).